A 148-amino-acid polypeptide reads, in one-letter code: UPF0756 membrane protein NMC1845 (148 aa).

4 helical membrane-spanning segments follow: residues 13–35 (LILLGVVSNNNSITISATILLLM), 50–70 (HGLNLGIILLTIGVLSPLVSG), 80–100 (FLNFKMISAVFIGIFVAWLAG), and 121–141 (VIGVAFMGGIPVGPLIAAGIL).

Belongs to the UPF0756 family.

The protein resides in the cell membrane. This is UPF0756 membrane protein NMC1845 from Neisseria meningitidis serogroup C / serotype 2a (strain ATCC 700532 / DSM 15464 / FAM18).